Here is a 291-residue protein sequence, read N- to C-terminus: MKNEIKYLYSDLDGTIVSWNPKTEFVYQNKSYKNFHEVSDATISAFYRLQQKGIKVGIVTGRDYCRVLWLEKQLRTGLPTITLDGAIIFYQNEILSQTYLDDRFIEGINNIVKRFPEAAYKLNSGWISYFTKNPSVIFEIDYAFLGYFNPNTKLQKKFIDSTENWDLNKLKVNQVYFDIDTCPLAMQKEIIELISVSDVNAKIYEHSMYIIKNGVSKASALQSLNQFAIPITKDNTIVCGDGDNDIEMMQWAKHSVSLIGSNPKCFALAKYHTDSVDNDGIANWIEKNLLC.

The active-site Nucleophile is Asp11. Asp11 lines the Mg(2+) pocket. Residue Leu12 participates in phosphate binding. Asp13 provides a ligand contact to Mg(2+). Residues 60–61 (TG) and Lys217 each bind phosphate. Asp241 is a binding site for Mg(2+). Asn244 contributes to the phosphate binding site.

It belongs to the HAD-like hydrolase superfamily. Cof family. It depends on Mg(2+) as a cofactor.

The chain is Putative phosphatase MG263 from Mycoplasma genitalium (strain ATCC 33530 / DSM 19775 / NCTC 10195 / G37) (Mycoplasmoides genitalium).